A 74-amino-acid polypeptide reads, in one-letter code: ATP synthase subunit c (74 aa).

The next 2 membrane-spanning stretches (helical) occupy residues 8 to 28 (FIGI…VSNI) and 52 to 72 (IGAG…MLLI).

This sequence belongs to the ATPase C chain family. F-type ATPases have 2 components, F(1) - the catalytic core - and F(0) - the membrane proton channel. F(1) has five subunits: alpha(3), beta(3), gamma(1), delta(1), epsilon(1). F(0) has three main subunits: a(1), b(2) and c(10-14). The alpha and beta chains form an alternating ring which encloses part of the gamma chain. F(1) is attached to F(0) by a central stalk formed by the gamma and epsilon chains, while a peripheral stalk is formed by the delta and b chains.

The protein localises to the cell inner membrane. Functionally, f(1)F(0) ATP synthase produces ATP from ADP in the presence of a proton or sodium gradient. F-type ATPases consist of two structural domains, F(1) containing the extramembraneous catalytic core and F(0) containing the membrane proton channel, linked together by a central stalk and a peripheral stalk. During catalysis, ATP synthesis in the catalytic domain of F(1) is coupled via a rotary mechanism of the central stalk subunits to proton translocation. Key component of the F(0) channel; it plays a direct role in translocation across the membrane. A homomeric c-ring of between 10-14 subunits forms the central stalk rotor element with the F(1) delta and epsilon subunits. The polypeptide is ATP synthase subunit c (Rickettsia typhi (strain ATCC VR-144 / Wilmington)).